Reading from the N-terminus, the 829-residue chain is Outer dense fiber protein 2 (829 aa).

Residues S73 and S74 each carry the phosphoserine modification. T92 carries the phosphothreonine modification. Residue S95 is modified to Phosphoserine; by TSSK4. S106 and S109 each carry phosphoserine. Residue T110 is modified to Phosphothreonine. A phosphoserine mark is found at S115 and S129. K138 participates in a covalent cross-link: Glycyl lysine isopeptide (Lys-Gly) (interchain with G-Cter in SUMO2). S139 bears the Phosphoserine mark. Residues 144 to 217 (QKGERQMAKR…MSKLVEAEMD (74 aa)) adopt a coiled-coil conformation. T231 carries the post-translational modification Phosphothreonine. Coiled coils occupy residues 245 to 423 (DINT…AEQL) and 461 to 798 (EIIV…NYVQ). A Phosphoserine modification is found at S261. Residues 392–413 (KQKGDRDKESLKKAIRAQKERA) form a disordered region. The tract at residues 537-701 (KNYEGMIDNY…EAIHQSQLRL (165 aa)) is interaction with BBOF1. Phosphoserine is present on S632.

Belongs to the ODF2 family. As to quaternary structure, self-associates. Associates with microtubules and forms a fibrillar structure partially linked to the microtubule network. Interacts via its C-terminus with PLK1. Interacts with ODF1. Interacts with MARK4; the interaction is required for localization of ODF2 to centrioles. Interacts with TSSK4. Interacts with AKNA. Interacts with QRICH2. Interacts with CFAP58. Interacts with BBOF1. Interacts with CCDC38. Interacts with CCDC42. Tyrosine phosphorylated. Phosphorylated by TSSK4 on Ser-95. As to expression, testis-specific (at protein level). Highly expressed in cytoplasm of step 2 round spermatids. Detected in the middle piece and extends to about half the principal piece of the sperm tails.

It is found in the cytoplasm. The protein localises to the cytoskeleton. Its subcellular location is the microtubule organizing center. The protein resides in the centrosome. It localises to the cell projection. It is found in the cilium. The protein localises to the centriole. Its subcellular location is the spindle pole. The protein resides in the flagellum. Its function is as follows. Seems to be a major component of sperm tail outer dense fibers (ODF). ODFs are filamentous structures located on the outside of the axoneme in the midpiece and principal piece of the mammalian sperm tail and may help to maintain the passive elastic structures and elastic recoil of the sperm tail. May have a modulating influence on sperm motility. Functions as a general scaffold protein that is specifically localized at the distal/subdistal appendages of mother centrioles. Component of the centrosome matrix required for the localization of PLK1 and NIN to the centrosomes. Required for the formation and/or maintenance of normal CETN1 assembly. The chain is Outer dense fiber protein 2 (ODF2) from Homo sapiens (Human).